The chain runs to 370 residues: GDSL esterase/lipase At1g33811 (370 aa).

A signal peptide spans 1–24 (MGILRFVLLISLNLVLFGFKTTVS). Residue Ser41 is the Nucleophile of the active site. Residues Asn203, Asn241, and Asn242 are each glycosylated (N-linked (GlcNAc...) asparagine). Residues Asp336 and His339 contribute to the active site.

The protein belongs to the 'GDSL' lipolytic enzyme family.

Its subcellular location is the secreted. This Arabidopsis thaliana (Mouse-ear cress) protein is GDSL esterase/lipase At1g33811.